We begin with the raw amino-acid sequence, 102 residues long: Large ribosomal subunit protein bL21 (102 aa).

This sequence belongs to the bacterial ribosomal protein bL21 family. In terms of assembly, part of the 50S ribosomal subunit. Contacts protein L20.

In terms of biological role, this protein binds to 23S rRNA in the presence of protein L20. This chain is Large ribosomal subunit protein bL21, found in Phytoplasma australiense.